The primary structure comprises 238 residues: MRHLHHQTSQTKLWAVIPAAGSGSRFSKTELKQYQYIQDATVIEHTVKRLSQLPLTGYVLAIGKQDTFASTLSFQDKHKAHFCNGGVERVHSVLNALNYLSQIADEDDWVLVHDAARPCVTFECLNTLVKNAIETNQSAILAIPVRDTLKQVNQEQQIDKTVSRELLWQAQTPQIAKIGILKKAIETALKNNLTITDEASALESIGESVQVVMGRSDNIKITYPDDLELARLILQSQN.

Belongs to the IspD/TarI cytidylyltransferase family. IspD subfamily.

The catalysed reaction is 2-C-methyl-D-erythritol 4-phosphate + CTP + H(+) = 4-CDP-2-C-methyl-D-erythritol + diphosphate. It functions in the pathway isoprenoid biosynthesis; isopentenyl diphosphate biosynthesis via DXP pathway; isopentenyl diphosphate from 1-deoxy-D-xylulose 5-phosphate: step 2/6. Functionally, catalyzes the formation of 4-diphosphocytidyl-2-C-methyl-D-erythritol from CTP and 2-C-methyl-D-erythritol 4-phosphate (MEP). The sequence is that of 2-C-methyl-D-erythritol 4-phosphate cytidylyltransferase from Acinetobacter baumannii (strain AYE).